We begin with the raw amino-acid sequence, 311 residues long: MSRHKSKKLIIEDDEPKQDELNPFSFKEFIRNKNQPSCSTEATEVYNGACLVEQDYNTSIDFATKGPFFTDPSALCQPPESEPDETWIESHQRSAIEGSPDFELCGASDISAYSEQSSLCSDEREAAEWELGQSDFLPKKHLSRISTGSYEGDEETSVIDISFHHKRGNAENGTKNLQQLREENSLLRKQVKELVRMSETDSRRIKQLTDEMHNKKLQEEKEANDLEAMVQSVEQNLQLMTKRAVKAENNISKLKQEMLKLQGQLEDYKSENERLRLGETAALATMRHNAQVASEYLNKAAQDAEISINSC.

A coiled-coil region spans residues 167–278; that stretch reads RGNAENGTKN…KSENERLRLG (112 aa).

This sequence belongs to the ENTR1 family.

It localises to the cytoplasm. The protein localises to the early endosome. It is found in the endosome. Its subcellular location is the recycling endosome. The protein resides in the midbody. It localises to the cytoskeleton. The protein localises to the microtubule organizing center. It is found in the centrosome. Its subcellular location is the cilium basal body. Its function is as follows. Endosome-associated protein that plays a role in membrane receptor sorting, cytokinesis and ciliogenesis. The polypeptide is Endosome-associated-trafficking regulator 1 (Danio rerio (Zebrafish)).